We begin with the raw amino-acid sequence, 260 residues long: Hydroxyethylthiazole kinase (260 aa).

Residue methionine 36 coordinates substrate. Positions 112 and 157 each coordinate ATP. Residue glycine 184 coordinates substrate.

It belongs to the Thz kinase family. Requires Mg(2+) as cofactor.

It catalyses the reaction 5-(2-hydroxyethyl)-4-methylthiazole + ATP = 4-methyl-5-(2-phosphooxyethyl)-thiazole + ADP + H(+). The protein operates within cofactor biosynthesis; thiamine diphosphate biosynthesis; 4-methyl-5-(2-phosphoethyl)-thiazole from 5-(2-hydroxyethyl)-4-methylthiazole: step 1/1. Catalyzes the phosphorylation of the hydroxyl group of 4-methyl-5-beta-hydroxyethylthiazole (THZ). The sequence is that of Hydroxyethylthiazole kinase from Shouchella clausii (strain KSM-K16) (Alkalihalobacillus clausii).